We begin with the raw amino-acid sequence, 164 residues long: Thiol peroxidase (164 aa).

The 146-residue stretch at 18–163 (VKTGETAPEF…FESALEAYRN (146 aa)) folds into the Thioredoxin domain. The Cysteine sulfenic acid (-SOH) intermediate role is filled by cysteine 60. Cysteine 60 and cysteine 93 are oxidised to a cystine.

The protein belongs to the peroxiredoxin family. Tpx subfamily. Homodimer.

The enzyme catalyses a hydroperoxide + [thioredoxin]-dithiol = an alcohol + [thioredoxin]-disulfide + H2O. In terms of biological role, thiol-specific peroxidase that catalyzes the reduction of hydrogen peroxide and organic hydroperoxides to water and alcohols, respectively. Plays a role in cell protection against oxidative stress by detoxifying peroxides. This is Thiol peroxidase from Staphylococcus saprophyticus subsp. saprophyticus (strain ATCC 15305 / DSM 20229 / NCIMB 8711 / NCTC 7292 / S-41).